A 547-amino-acid polypeptide reads, in one-letter code: Myrosinase 2 (547 aa).

An N-terminal signal peptide occupies residues 1–28 (MQHNTYIYILTMKLLGFALAILLVVATC). 3 cysteine pairs are disulfide-bonded: Cys36–Cys460, Cys44–Cys456, and Cys236–Cys244. Residues Gln69, His171, and 216-217 (NQ) each bind a beta-D-glucoside. Asn340 carries N-linked (GlcNAc...) asparagine glycosylation. Tyr359 serves as a coordination point for a beta-D-glucoside. N-linked (GlcNAc...) asparagine glycosylation is present at Asn384. A beta-D-glucoside-binding positions include Glu430, Trp479, 486–487 (EF), and Phe495. Glu430 serves as the catalytic Nucleophile. Asn504 carries an N-linked (GlcNAc...) asparagine glycan.

Belongs to the glycosyl hydrolase 1 family. As to quaternary structure, interacts with MVP1. In terms of tissue distribution, expressed in phloem-associated cells.

The enzyme catalyses a thioglucoside + H2O = a sugar + a thiol.. Its function is as follows. May degrade glucosinolates (glucose residue linked by a thioglucoside bound to an amino acid derivative) to glucose, sulfate and any of the products: thiocyanates, isothiocyanates, nitriles, epithionitriles or oxazolidine-2-thiones. These toxic degradation products can deter insect herbivores. Seems to function in abscisic acid (ABA) and methyl jasmonate (MeJA) signaling in guard cells. Functionally redundant with TGG1. The chain is Myrosinase 2 from Arabidopsis thaliana (Mouse-ear cress).